A 430-amino-acid polypeptide reads, in one-letter code: D-galactonate transporter (430 aa).

Residues 1–17 (MDIPVNAAKPGRRRYLT) lie on the Cytoplasmic side of the membrane. Residues 18–39 (LVMIFITVVICYVDRANLAVAS) traverse the membrane as a helical segment. The D-galactonate site is built by tyrosine 29 and arginine 32. At 40-50 (AHIQEEFGITK) the chain is on the periplasmic side. The chain crosses the membrane as a helical span at residues 51 to 74 (AEMGYVFSAFAWLYTLCQIPGGWF). Position 64 (tyrosine 64) interacts with D-galactonate. Residues 75 to 81 (LDRVGSR) are Cytoplasmic-facing. The helical transmembrane segment at 82–100 (VTYFIAIFGWSVATLFQGF) threads the bilayer. At 101–103 (ATG) the chain is on the periplasmic side. Residues 104–125 (LMSLIGLRAITGIFEAPAFPTN) traverse the membrane as a helical segment. The Cytoplasmic portion of the chain corresponds to 126–141 (NRMVTSWFPEHERASA). A helical transmembrane segment spans residues 142-164 (VGFYTSGQFVGLAFLTPLLIWIQ). At 165 to 168 (EMLS) the chain is on the periplasmic side. Residues 169 to 190 (WHWVFIVTGGIGIIWSLIWFKV) traverse the membrane as a helical segment. At 191 to 241 (YQPPRLTKGISKAELDYIRDGGGLVDGDAPVKKEARQPLTAKDWKLVFHRK) the chain is on the cytoplasmic side. Residues 242 to 267 (LIGVYLGQFAVASTLWFFLTWFPNYL) traverse the membrane as a helical segment. The Periplasmic portion of the chain corresponds to 268–276 (TQEKGITAL). The helical transmembrane segment at 277-297 (KAGFMTTVPFLAAFVGVLLSG) threads the bilayer. Over 298 to 314 (WVADLLVRKGFSLGFAR) the chain is Cytoplasmic. A helical membrane pass occupies residues 315 to 333 (KTPIICGLLISTCIMGANY). At 334–336 (TND) the chain is on the periplasmic side. A helical transmembrane segment spans residues 337–354 (PMMIMCLMALAFFGNGFA). Residues 355–373 (SITWSLVSSLAPMRLIGLT) lie on the Cytoplasmic side of the membrane. Tryptophan 358 is a D-galactonate binding site. A helical transmembrane segment spans residues 374–395 (GGVFNFAGGLGGITVPLVVGYL). At 396–400 (AQGYG) the chain is on the periplasmic side. Residues 401–423 (FAPALVYISAVALIGALSYILLV) form a helical membrane-spanning segment. Topologically, residues 424 to 430 (GDVKRVG) are cytoplasmic.

This sequence belongs to the major facilitator superfamily. Phthalate permease family.

Its subcellular location is the cell inner membrane. The enzyme catalyses D-galactonate(in) + H(+)(in) = D-galactonate(out) + H(+)(out). In terms of biological role, involved in D-galactonate metabolism. Catalyzes the proton-dependent uptake of galactonate into the cell. In Escherichia coli O6:H1 (strain CFT073 / ATCC 700928 / UPEC), this protein is D-galactonate transporter (dgoT).